The sequence spans 403 residues: Phosphoglycerate kinase (403 aa).

Substrate contacts are provided by residues D21–N23, R36, H59–R62, R119, and R159. ATP contacts are provided by residues K214, G301, E332, and G359–S362.

This sequence belongs to the phosphoglycerate kinase family. Monomer.

The protein resides in the cytoplasm. It catalyses the reaction (2R)-3-phosphoglycerate + ATP = (2R)-3-phospho-glyceroyl phosphate + ADP. It functions in the pathway carbohydrate degradation; glycolysis; pyruvate from D-glyceraldehyde 3-phosphate: step 2/5. This is Phosphoglycerate kinase from Lactobacillus helveticus (strain DPC 4571).